Reading from the N-terminus, the 457-residue chain is Siroheme synthase (457 aa).

Residues 1-204 (MDHLPIFCQL…NDQKAITETT (204 aa)) are precorrin-2 dehydrogenase /sirohydrochlorin ferrochelatase. NAD(+) contacts are provided by residues 22-23 (DV) and 43-44 (LA). Phosphoserine is present on Ser128. The tract at residues 216-457 (GEVVLVGAGP…RDKLNWFSNH (242 aa)) is uroporphyrinogen-III C-methyltransferase. Residue Pro225 coordinates S-adenosyl-L-methionine. The active-site Proton acceptor is Asp248. The active-site Proton donor is Lys270. S-adenosyl-L-methionine is bound by residues 301 to 303 (GGD), Ile306, 331 to 332 (TA), Met382, and Gly411.

In the N-terminal section; belongs to the precorrin-2 dehydrogenase / sirohydrochlorin ferrochelatase family. The protein in the C-terminal section; belongs to the precorrin methyltransferase family.

The catalysed reaction is uroporphyrinogen III + 2 S-adenosyl-L-methionine = precorrin-2 + 2 S-adenosyl-L-homocysteine + H(+). It carries out the reaction precorrin-2 + NAD(+) = sirohydrochlorin + NADH + 2 H(+). The enzyme catalyses siroheme + 2 H(+) = sirohydrochlorin + Fe(2+). Its pathway is cofactor biosynthesis; adenosylcobalamin biosynthesis; precorrin-2 from uroporphyrinogen III: step 1/1. It participates in cofactor biosynthesis; adenosylcobalamin biosynthesis; sirohydrochlorin from precorrin-2: step 1/1. The protein operates within porphyrin-containing compound metabolism; siroheme biosynthesis; precorrin-2 from uroporphyrinogen III: step 1/1. It functions in the pathway porphyrin-containing compound metabolism; siroheme biosynthesis; siroheme from sirohydrochlorin: step 1/1. Its pathway is porphyrin-containing compound metabolism; siroheme biosynthesis; sirohydrochlorin from precorrin-2: step 1/1. In terms of biological role, multifunctional enzyme that catalyzes the SAM-dependent methylations of uroporphyrinogen III at position C-2 and C-7 to form precorrin-2 via precorrin-1. Then it catalyzes the NAD-dependent ring dehydrogenation of precorrin-2 to yield sirohydrochlorin. Finally, it catalyzes the ferrochelation of sirohydrochlorin to yield siroheme. The protein is Siroheme synthase of Escherichia coli O7:K1 (strain IAI39 / ExPEC).